A 224-amino-acid chain; its full sequence is Small ribosomal subunit protein uS7 (224 aa).

Belongs to the universal ribosomal protein uS7 family. In terms of assembly, part of the 30S ribosomal subunit.

Functionally, one of the primary rRNA binding proteins, it binds directly to 16S rRNA where it nucleates assembly of the head domain of the 30S subunit. Is located at the subunit interface close to the decoding center. In Caldivirga maquilingensis (strain ATCC 700844 / DSM 13496 / JCM 10307 / IC-167), this protein is Small ribosomal subunit protein uS7.